The primary structure comprises 427 residues: Serine--tRNA ligase (427 aa).

An L-serine-binding site is contributed by 235 to 237 (TAE). ATP contacts are provided by residues 266-268 (RRE) and Val-282. An L-serine-binding site is contributed by Glu-289. Residue 353-356 (EASS) coordinates ATP. Ser-389 contributes to the L-serine binding site.

Belongs to the class-II aminoacyl-tRNA synthetase family. Type-1 seryl-tRNA synthetase subfamily. As to quaternary structure, homodimer. The tRNA molecule binds across the dimer.

It is found in the cytoplasm. It catalyses the reaction tRNA(Ser) + L-serine + ATP = L-seryl-tRNA(Ser) + AMP + diphosphate + H(+). The catalysed reaction is tRNA(Sec) + L-serine + ATP = L-seryl-tRNA(Sec) + AMP + diphosphate + H(+). The protein operates within aminoacyl-tRNA biosynthesis; selenocysteinyl-tRNA(Sec) biosynthesis; L-seryl-tRNA(Sec) from L-serine and tRNA(Sec): step 1/1. Functionally, catalyzes the attachment of serine to tRNA(Ser). Is also able to aminoacylate tRNA(Sec) with serine, to form the misacylated tRNA L-seryl-tRNA(Sec), which will be further converted into selenocysteinyl-tRNA(Sec). The polypeptide is Serine--tRNA ligase (Chlorobium phaeobacteroides (strain BS1)).